Reading from the N-terminus, the 154-residue chain is 6,7-dimethyl-8-ribityllumazine synthase (154 aa).

Residues F22, 56-58 (AFE), and 80-82 (TVI) each bind 5-amino-6-(D-ribitylamino)uracil. 85–86 (ST) contributes to the (2S)-2-hydroxy-3-oxobutyl phosphate binding site. The active-site Proton donor is H88. F113 provides a ligand contact to 5-amino-6-(D-ribitylamino)uracil. R127 provides a ligand contact to (2S)-2-hydroxy-3-oxobutyl phosphate.

The protein belongs to the DMRL synthase family.

It carries out the reaction (2S)-2-hydroxy-3-oxobutyl phosphate + 5-amino-6-(D-ribitylamino)uracil = 6,7-dimethyl-8-(1-D-ribityl)lumazine + phosphate + 2 H2O + H(+). The protein operates within cofactor biosynthesis; riboflavin biosynthesis; riboflavin from 2-hydroxy-3-oxobutyl phosphate and 5-amino-6-(D-ribitylamino)uracil: step 1/2. In terms of biological role, catalyzes the formation of 6,7-dimethyl-8-ribityllumazine by condensation of 5-amino-6-(D-ribitylamino)uracil with 3,4-dihydroxy-2-butanone 4-phosphate. This is the penultimate step in the biosynthesis of riboflavin. In Lactococcus lactis subsp. lactis (strain IL1403) (Streptococcus lactis), this protein is 6,7-dimethyl-8-ribityllumazine synthase.